Consider the following 233-residue polypeptide: Protein lin-7 homolog A (233 aa).

The short motif at 14 to 28 (MATLTVVQPLTLDRD) is the Kinase interacting site element. The 56-residue stretch at 25–80 (LDRDVARAIELLEKLQESGEVPVHKLQSLKKVLQSEFCTAIREVYQYMHETITVNG) folds into the L27 domain. Residues 108 to 190 (VVELPKTDEG…SVKLVVRYTP (83 aa)) enclose the PDZ domain. The interval 214–233 (LLIQQQQQQQQQQPQQNHMS) is disordered.

The protein belongs to the lin-7 family. Forms a complex with CASK and CASKIN1. Component of the brain-specific heterotrimeric complex (LIN-10-LIN-2-LIN-7 complex) composed of at least APBA1, CASK, and LIN7, which associates with the motor protein KIF17 to transport vesicles along microtubules. Can also interact with other modular proteins containing protein-protein interaction domains like PALS1, PALS2, MPP7, DLG1, DLG2 and DLG3 through its L27 domain. Interacts with DLG4, GRIN2B and MARCHF11 as well as CDH1 and CTNNB1, the channels KCNJ12/Kir2.2, KCNJ4/Kir2.3 and probably KCNJ2/Kir2.1 and SLC6A12/BGT-1 via its PDZ domain. The association of LIN7A with cadherin and beta-catenin is calcium-dependent, occurs at synaptic junctions and requires the actin cytoskeleton. Interacts with EGFR, ERBB2, ERBB3 and ERBB4 with both PDZ and KID domains. Associates with KIF17 via APBA1. Interacts with HTR4. Forms a tripartite complex composed of DLG1, MPP7 and LIN7 (LIN7A or LIN7C). As to expression, expressed in the kidney, along the length of the nephron.

It is found in the cell membrane. The protein localises to the basolateral cell membrane. It localises to the cell junction. Its subcellular location is the postsynaptic density membrane. The protein resides in the tight junction. Functionally, plays a role in establishing and maintaining the asymmetric distribution of channels and receptors at the plasma membrane of polarized cells. Forms membrane-associated multiprotein complexes that may regulate delivery and recycling of proteins to the correct membrane domains. The tripartite complex composed of LIN7 (LIN7A, LIN7B or LIN7C), CASK and APBA1 associates with the motor protein KIF17 to transport vesicles containing N-methyl-D-aspartate (NMDA) receptor subunit NR2B along microtubules. This complex may have the potential to couple synaptic vesicle exocytosis to cell adhesion in brain. Ensures the proper localization of GRIN2B (subunit 2B of the NMDA receptor) to neuronal postsynaptic density and may function in localizing synaptic vesicles at synapses where it is recruited by beta-catenin and cadherin. Required to localize Kir2 channels, GABA transporter (SLC6A12) and EGFR/ERBB1, ERBB2, ERBB3 and ERBB4 to the basolateral membrane of epithelial cells. This chain is Protein lin-7 homolog A (Lin7a), found in Mus musculus (Mouse).